A 339-amino-acid chain; its full sequence is Transcription initiation factor IIB (339 aa).

Residues 39 to 70 (EELICPVCGSKSIIKDYERAEIVCEMCGCVLQ) form a TFIIB-type zinc finger. Positions 43, 46, 62, and 65 each coordinate Zn(2+). 2 tandem repeats follow at residues 156–239 (SELD…SREL) and 250–331 (DYVP…ELTE).

Belongs to the TFIIB family.

Functionally, stabilizes TBP binding to an archaeal box-A promoter. Also responsible for recruiting RNA polymerase II to the pre-initiation complex (DNA-TBP-TFIIB). The protein is Transcription initiation factor IIB of Methanococcus maripaludis (strain DSM 14266 / JCM 13030 / NBRC 101832 / S2 / LL).